The following is an 883-amino-acid chain: Phosphoenolpyruvate carboxylase (883 aa).

Active-site residues include histidine 138 and lysine 546.

This sequence belongs to the PEPCase type 1 family. Requires Mg(2+) as cofactor.

The catalysed reaction is oxaloacetate + phosphate = phosphoenolpyruvate + hydrogencarbonate. Functionally, forms oxaloacetate, a four-carbon dicarboxylic acid source for the tricarboxylic acid cycle. This Salmonella arizonae (strain ATCC BAA-731 / CDC346-86 / RSK2980) protein is Phosphoenolpyruvate carboxylase.